The following is a 284-amino-acid chain: uncharacterized protein (284 aa).

This sequence belongs to the methyltransferase superfamily.

It is found in the cytoplasm. Its subcellular location is the nucleus. Probable methyltransferase. This is an uncharacterized protein from Schizosaccharomyces pombe (strain 972 / ATCC 24843) (Fission yeast).